The chain runs to 214 residues: Endosomal/vacuolar adapter protein YPT35 (214 aa).

The segment at 1 to 63 (MNDKISFLPP…ATITRTRPRR (63 aa)) is disordered. Positions 5–15 (ISFLPPEPIQL) match the PxP motif. Acidic residues predominate over residues 16 to 31 (LDEDSTEPELDIDSQQ). Over residues 38–58 (SASNSNDSTSHSNDCGATITR) the composition is skewed to low complexity. A phosphoserine mark is found at Ser65 and Ser66. One can recognise a PX domain in the interval 73–213 (FQKAHVSDCT…IQFLEPSKRV (141 aa)).

This sequence belongs to the YPT35 family. In terms of assembly, interacts with RBD2, YIF1, YIP1 and YIP4.

The protein localises to the endosome membrane. It is found in the vacuole membrane. Recruits the lipid transfer protein VPS13 to endosomal and vacuolar membranes. This is Endosomal/vacuolar adapter protein YPT35 (YPT35) from Saccharomyces cerevisiae (strain YJM789) (Baker's yeast).